We begin with the raw amino-acid sequence, 199 residues long: dITP/XTP pyrophosphatase (199 aa).

8–13 (TRNKGK) contributes to the substrate binding site. Mg(2+) contacts are provided by Glu-41 and Asp-70. Asp-70 serves as the catalytic Proton acceptor. Residues Ser-71, 153–156 (FGYD), Lys-176, and 181–182 (HR) each bind substrate.

Belongs to the HAM1 NTPase family. In terms of assembly, homodimer. Requires Mg(2+) as cofactor.

It carries out the reaction XTP + H2O = XMP + diphosphate + H(+). The enzyme catalyses dITP + H2O = dIMP + diphosphate + H(+). The catalysed reaction is ITP + H2O = IMP + diphosphate + H(+). Pyrophosphatase that catalyzes the hydrolysis of nucleoside triphosphates to their monophosphate derivatives, with a high preference for the non-canonical purine nucleotides XTP (xanthosine triphosphate), dITP (deoxyinosine triphosphate) and ITP. Seems to function as a house-cleaning enzyme that removes non-canonical purine nucleotides from the nucleotide pool, thus preventing their incorporation into DNA/RNA and avoiding chromosomal lesions. The sequence is that of dITP/XTP pyrophosphatase from Geobacter sulfurreducens (strain ATCC 51573 / DSM 12127 / PCA).